Consider the following 398-residue polypeptide: Acetate kinase (398 aa).

Residue Asn8 coordinates Mg(2+). An ATP-binding site is contributed by Lys15. Arg92 contacts substrate. Asp149 (proton donor/acceptor) is an active-site residue. ATP-binding positions include 209–213 (HLGNG), 283–285 (DFR), and 331–335 (GVGEN). Glu385 is a Mg(2+) binding site.

This sequence belongs to the acetokinase family. In terms of assembly, homodimer. Mg(2+) serves as cofactor. Mn(2+) is required as a cofactor.

It is found in the cytoplasm. The catalysed reaction is acetate + ATP = acetyl phosphate + ADP. It functions in the pathway metabolic intermediate biosynthesis; acetyl-CoA biosynthesis; acetyl-CoA from acetate: step 1/2. Functionally, catalyzes the formation of acetyl phosphate from acetate and ATP. Can also catalyze the reverse reaction. This Corynebacterium efficiens (strain DSM 44549 / YS-314 / AJ 12310 / JCM 11189 / NBRC 100395) protein is Acetate kinase.